Consider the following 101-residue polypeptide: Large ribosomal subunit protein uL23 (101 aa).

It belongs to the universal ribosomal protein uL23 family. As to quaternary structure, part of the 50S ribosomal subunit. Contacts protein L29, and trigger factor when it is bound to the ribosome.

Its function is as follows. One of the early assembly proteins it binds 23S rRNA. One of the proteins that surrounds the polypeptide exit tunnel on the outside of the ribosome. Forms the main docking site for trigger factor binding to the ribosome. This chain is Large ribosomal subunit protein uL23, found in Corynebacterium jeikeium (strain K411).